The following is a 977-amino-acid chain: SLIT and NTRK-like protein 3 (977 aa).

Residues 1-26 form the signal peptide; it reads MKPSIAEMLHRGRMLWIILLSTIALG. At 29-654 the chain is on the extracellular side; sequence TPIPLIEDSE…SPPGGPVPLS (626 aa). A glycan (N-linked (GlcNAc...) asparagine) is linked at asparagine 68. LRR repeat units lie at residues 78–99, 102–123, 126–147, 150–171, 174–195, and 197–218; these read RPFK…SFLH, NAVS…AFNG, ILKR…TFLG, SLEY…AFRN, KLRV…LFKA, and SLTH…GMLD. In terms of domain architecture, LRRCT 1 spans 232 to 283; the sequence is NPWNCTCEIVQLKSWLERIPYTALVGDITCETPFHFHGKDLREIRKTELCPL. The segment at 325-360 is disordered; the sequence is EYKSSNKQPKPTKQPRTPRPPSTSQALYPGPNQPPI. Positions 364–406 constitute an LRRNT domain; it reads QTRPPIPIICPTGCTCNLHINDLGLTVNCKERGFNNISELLPR. LRR repeat units follow at residues 409–430, 433–454, 457–478, 481–502, 505–526, and 528–549; these read NAKK…DFWN, SLDL…AFIN, NLKS…MFRG, SLHY…AFSL, NLKL…AFAG, and SLAR…GVLE. The region spanning 562-613 is the LRRCT 2 domain; that stretch reads NPWDCTCDLVPFKQWIETISSVSVVGDVLCRSPENLTHRDVRTIELEVLCPE. N-linked (GlcNAc...) asparagine glycosylation occurs at asparagine 596. A helical membrane pass occupies residues 655-675; that stretch reads VLILSLLVLFFSAVFVAAGLF. Residues 676 to 977 are Cytoplasmic-facing; sequence AYVLRRRRKK…EVLEKTTYRF (302 aa). Disordered stretches follow at residues 708–735 and 761–790; these read LFED…KAPP and EEEV…MGEA. Positions 711–724 are enriched in gly residues; it reads DGGGGGGGSGGGGR. The span at 765–775 shows a compositional bias: low complexity; it reads AVSSAQEAGSA.

It belongs to the SLITRK family. Expressed in the occipital lobe of the cerebral cortex of the brain. Expressed at higher levels in some astrocytic brain tumors such as astrocytomas, oligodendrogliomas, glioblastomas, gangliogliomas and primitive neuroectodermal tumors.

The protein resides in the membrane. Functionally, suppresses neurite outgrowth. The polypeptide is SLIT and NTRK-like protein 3 (SLITRK3) (Homo sapiens (Human)).